Reading from the N-terminus, the 237-residue chain is MDKKKRILVKFSGEALAGDSGFGIDSTILKFIANEIKSLVDMGVEVGIVIGGGNIIRGVSAAAGGIIKRTSGDHMGMLATVINAIAMREALEFYDVDVRVQSAIKMEAICETFIIGRAKRHLEKGRVVIFAAGTGNPFFTTDTAATLRAIEIESDMIIKATKVNGVYDKDPNKFEEAVLLNSLTYDEALKDNIKVMDDTAIALAKDNHLPIVVCNMFKSGNLCKIADDDLSFCSIVK.

10 to 13 (KFSG) contributes to the ATP binding site. The involved in allosteric activation by GTP stretch occupies residues 18–23 (GDSGFG). Gly52 contributes to the UMP binding site. Residues Gly53 and Arg57 each contribute to the ATP site. UMP contacts are provided by residues Asp73 and 134-141 (TGNPFFTT). Positions 161, 167, and 170 each coordinate ATP.

The protein belongs to the UMP kinase family. As to quaternary structure, homohexamer.

The protein resides in the cytoplasm. The enzyme catalyses UMP + ATP = UDP + ADP. It functions in the pathway pyrimidine metabolism; CTP biosynthesis via de novo pathway; UDP from UMP (UMPK route): step 1/1. With respect to regulation, allosterically activated by GTP. Inhibited by UTP. Catalyzes the reversible phosphorylation of UMP to UDP. The sequence is that of Uridylate kinase from Campylobacter hominis (strain ATCC BAA-381 / DSM 21671 / CCUG 45161 / LMG 19568 / NCTC 13146 / CH001A).